Reading from the N-terminus, the 204-residue chain is Peptide deformylase (204 aa).

Residues Cys-131 and His-174 each contribute to the Fe cation site. Glu-175 is a catalytic residue. His-178 is a Fe cation binding site.

The protein belongs to the polypeptide deformylase family. It depends on Fe(2+) as a cofactor.

It catalyses the reaction N-terminal N-formyl-L-methionyl-[peptide] + H2O = N-terminal L-methionyl-[peptide] + formate. In terms of biological role, removes the formyl group from the N-terminal Met of newly synthesized proteins. Requires at least a dipeptide for an efficient rate of reaction. N-terminal L-methionine is a prerequisite for activity but the enzyme has broad specificity at other positions. This Streptococcus equi subsp. zooepidemicus (strain MGCS10565) protein is Peptide deformylase.